The chain runs to 436 residues: 5-methylthioadenosine/S-adenosylhomocysteine deaminase (436 aa).

2 residues coordinate Zn(2+): histidine 66 and histidine 68. Residues glutamate 95, arginine 147, arginine 161, and histidine 187 each contribute to the substrate site. Histidine 214 is a Zn(2+) binding site. Substrate-binding residues include glutamate 217 and aspartate 303. Aspartate 303 serves as a coordination point for Zn(2+).

Belongs to the metallo-dependent hydrolases superfamily. MTA/SAH deaminase family. Requires Zn(2+) as cofactor.

It catalyses the reaction S-adenosyl-L-homocysteine + H2O + H(+) = S-inosyl-L-homocysteine + NH4(+). The enzyme catalyses S-methyl-5'-thioadenosine + H2O + H(+) = S-methyl-5'-thioinosine + NH4(+). Its function is as follows. Catalyzes the deamination of 5-methylthioadenosine and S-adenosyl-L-homocysteine into 5-methylthioinosine and S-inosyl-L-homocysteine, respectively. Is also able to deaminate adenosine. This is 5-methylthioadenosine/S-adenosylhomocysteine deaminase from Symbiobacterium thermophilum (strain DSM 24528 / JCM 14929 / IAM 14863 / T).